The primary structure comprises 250 residues: U6 snRNA phosphodiesterase 1 (250 aa).

The tract at residues 1-31 (MALVSYSSSEEDEGETSEPPGRRLPPLPPPT) is disordered. The span at 22–31 (RRLPPLPPPT) shows a compositional bias: pro residues. The active-site Proton acceptor is histidine 105. 105–107 (HIS) contributes to the AMP binding site. Residues glutamine 149, tyrosine 187, and 191–195 (SFHVS) contribute to the UMP site. Residues tyrosine 187 and 189–195 (EPSFHVS) each bind AMP. Catalysis depends on histidine 193, which acts as the Proton donor.

The protein belongs to the 2H phosphoesterase superfamily. USB1 family.

The protein localises to the nucleus. It carries out the reaction a 3'-end uridylyl-uridine-RNA = a 3'-end 2',3'-cyclophospho-uridine-RNA + uridine. It catalyses the reaction a 3'-end uridylyl-adenosine-RNA = a 3'-end 2',3'-cyclophospho-uridine-RNA + adenosine. 3'-5' RNA exonuclease that trims the 3' end of oligo(U) and oligo(A) tracts of the pre-U6 small nuclear RNA (snRNA) molecule, leading to the formation of a mature U6 snRNA 3' end-terminated with a 2',3'-cyclic phosphate. Participates in the U6 snRNA 3' end processing that prevents U6 snRNA degradation. In addition also removes uridines from the 3' end of U6atac snRNA and possibly the vault RNA VTRNA1-1. In Xenopus laevis (African clawed frog), this protein is U6 snRNA phosphodiesterase 1.